Consider the following 153-residue polypeptide: Arginine repressor (153 aa).

It belongs to the ArgR family.

The protein localises to the cytoplasm. The protein operates within amino-acid biosynthesis; L-arginine biosynthesis [regulation]. Functionally, regulates arginine biosynthesis genes. The protein is Arginine repressor of Glaesserella parasuis serovar 5 (strain SH0165) (Haemophilus parasuis).